The primary structure comprises 121 residues: Large ribosomal subunit protein bL12 (121 aa).

The protein belongs to the bacterial ribosomal protein bL12 family. Homodimer. Part of the ribosomal stalk of the 50S ribosomal subunit. Forms a multimeric L10(L12)X complex, where L10 forms an elongated spine to which 2 to 4 L12 dimers bind in a sequential fashion. Binds GTP-bound translation factors.

Its function is as follows. Forms part of the ribosomal stalk which helps the ribosome interact with GTP-bound translation factors. Is thus essential for accurate translation. The polypeptide is Large ribosomal subunit protein bL12 (Limosilactobacillus fermentum (strain NBRC 3956 / LMG 18251) (Lactobacillus fermentum)).